Consider the following 41-residue polypeptide: Cytochrome b559 subunit beta (41 aa).

A helical membrane pass occupies residues 16-32 (WLAVHALAVPTVFFLGA). Position 20 (histidine 20) interacts with heme.

This sequence belongs to the PsbE/PsbF family. As to quaternary structure, heterodimer of an alpha subunit and a beta subunit. PSII is composed of 1 copy each of membrane proteins PsbA, PsbB, PsbC, PsbD, PsbE, PsbF, PsbH, PsbI, PsbJ, PsbK, PsbL, PsbM, PsbT, PsbX, PsbY, PsbZ, Psb30/Ycf12, at least 3 peripheral proteins of the oxygen-evolving complex and a large number of cofactors. It forms dimeric complexes. Requires heme b as cofactor.

The protein resides in the plastid. It localises to the chloroplast thylakoid membrane. Functionally, this b-type cytochrome is tightly associated with the reaction center of photosystem II (PSII). PSII is a light-driven water:plastoquinone oxidoreductase that uses light energy to abstract electrons from H(2)O, generating O(2) and a proton gradient subsequently used for ATP formation. It consists of a core antenna complex that captures photons, and an electron transfer chain that converts photonic excitation into a charge separation. The protein is Cytochrome b559 subunit beta of Chlorella vulgaris (Green alga).